We begin with the raw amino-acid sequence, 195 residues long: HTH-type transcriptional regulator BetI (195 aa).

Residues 8–68 (SIRRRQLIDA…ATMRDITSQL (61 aa)) enclose the HTH tetR-type domain. Positions 31-50 (TIAQIARRAGVSTGIISHYF) form a DNA-binding region, H-T-H motif.

It functions in the pathway amine and polyamine biosynthesis; betaine biosynthesis via choline pathway [regulation]. In terms of biological role, repressor involved in the biosynthesis of the osmoprotectant glycine betaine. It represses transcription of the choline transporter BetT and the genes of BetAB involved in the synthesis of glycine betaine. The protein is HTH-type transcriptional regulator BetI of Shigella flexneri serotype 5b (strain 8401).